The sequence spans 107 residues: High mobility group protein HMG-I/HMG-Y (107 aa).

A disordered region spans residues 1-107 (MSESSSKSSQ…ISQESSEEEQ (107 aa)). S2 is modified (N-acetylserine). K7 is subject to N6-acetyllysine. Residue S8 is modified to ADP-ribosylserine. S9 is modified (ADP-ribosylserine; alternate). S9 carries the phosphoserine; alternate modification. K15 bears the N6-acetyllysine; alternate mark. K15 is covalently cross-linked (Glycyl lysine isopeptide (Lys-Gly) (interchain with G-Cter in SUMO2); alternate). The segment covering 15-24 (KQEKDGTEKR) has biased composition (basic and acidic residues). Positions 21-31 (TEKRGRGRPRK) form a DNA-binding region, a.T hook 1. R26 bears the Asymmetric dimethylarginine; alternate mark. R26 bears the Omega-N-methylarginine; alternate mark. A Symmetric dimethylarginine; alternate modification is found at R26. S36 carries the phosphoserine; by HIPK2 and CDC2 modification. At T39 the chain carries Phosphothreonine. Phosphoserine occurs at positions 44 and 49. T53 is subject to Phosphothreonine; by HIPK2 and CDC2. 2 DNA-binding regions (a.T hook) span residues 53–63 (TPKRPRGRPKG) and 78–89 (APGRKPRGRPKK). The tract at residues 53-77 (TPKRPRGRPKGSKNKGAAKTRKATT) is interaction with HIPK2. Residues 55–74 (KRPRGRPKGSKNKGAAKTRK) are compositionally biased toward basic residues. An asymmetric dimethylarginine; by PRMT6; alternate mark is found at R58 and R60. Omega-N-methylarginine; by PRMT6; alternate occurs at positions 58 and 60. A compositionally biased stretch (acidic residues) spans 93 to 107 (EEEEGISQESSEEEQ). Phosphoserine occurs at positions 99, 102, and 103.

The protein belongs to the HMGA family. In terms of assembly, interacts with HIPK2. In terms of processing, isoforms HMG-I and HMG-Y can be phosphorylated by HIPK2. Phosphorylation may modulate DNA-binding affinity. Methylation at Arg-58 is mutually exclusive with methylation at Arg-60.

The protein resides in the nucleus. It is found in the chromosome. HMG-I/Y bind preferentially to the minor groove of A+T rich regions in double-stranded DNA. It is suggested that these proteins could function in nucleosome phasing and in the 3'-end processing of mRNA transcripts. They are also involved in the transcription regulation of genes containing, or in close proximity to A+T-rich regions. This is High mobility group protein HMG-I/HMG-Y (HMGA1) from Cricetulus griseus (Chinese hamster).